We begin with the raw amino-acid sequence, 626 residues long: DNA-directed RNA polymerase subunit gamma (626 aa).

Cys-71, Cys-73, Cys-86, and Cys-89 together coordinate Zn(2+). Residues Asp-467, Asp-469, and Asp-471 each contribute to the Mg(2+) site.

This sequence belongs to the RNA polymerase beta' chain family. RpoC1 subfamily. As to quaternary structure, in cyanobacteria the RNAP catalytic core is composed of 2 alpha, 1 beta, 1 beta', 1 gamma and 1 omega subunit. When a sigma factor is associated with the core the holoenzyme is formed, which can initiate transcription. It depends on Mg(2+) as a cofactor. Zn(2+) is required as a cofactor.

The catalysed reaction is RNA(n) + a ribonucleoside 5'-triphosphate = RNA(n+1) + diphosphate. DNA-dependent RNA polymerase catalyzes the transcription of DNA into RNA using the four ribonucleoside triphosphates as substrates. This Microcystis aeruginosa (strain NIES-843 / IAM M-2473) protein is DNA-directed RNA polymerase subunit gamma.